The sequence spans 354 residues: Thiamine thiazole synthase (354 aa).

Substrate-binding positions include Ala83, 104–105 (EA), Gly112, and Val177. Cys210 is modified (2,3-didehydroalanine (Cys)). Substrate-binding positions include Asp212, His227, Met305, and 315-317 (RMG).

It belongs to the THI4 family. As to quaternary structure, homooctamer. It depends on Fe cation as a cofactor. During the catalytic reaction, a sulfide is transferred from Cys-210 to a reaction intermediate, generating a dehydroalanine residue.

Its subcellular location is the cytoplasm. The protein resides in the nucleus. The enzyme catalyses [ADP-thiazole synthase]-L-cysteine + glycine + NAD(+) = [ADP-thiazole synthase]-dehydroalanine + ADP-5-ethyl-4-methylthiazole-2-carboxylate + nicotinamide + 3 H2O + 2 H(+). In terms of biological role, involved in biosynthesis of the thiamine precursor thiazole. Catalyzes the conversion of NAD and glycine to adenosine diphosphate 5-(2-hydroxyethyl)-4-methylthiazole-2-carboxylic acid (ADT), an adenylated thiazole intermediate. The reaction includes an iron-dependent sulfide transfer from a conserved cysteine residue of the protein to a thiazole intermediate. The enzyme can only undergo a single turnover, which suggests it is a suicide enzyme. May have additional roles in adaptation to various stress conditions and in DNA damage tolerance. This is Thiamine thiazole synthase from Candida albicans (strain SC5314 / ATCC MYA-2876) (Yeast).